A 745-amino-acid polypeptide reads, in one-letter code: Double-stranded RNA-specific editase B2 (745 aa).

2 disordered regions span residues 1–35 (MASVLGSGRGSGGLSSQLKCKSKRRRRRRSKRKDK) and 50–104 (SPGT…PLEE). A compositionally biased stretch (basic residues) spans 20-34 (CKSKRRRRRRSKRKD). The R-domain (ssRNA-binding) stretch occupies residues 23 to 35 (KRRRRRRSKRKDK). DRBM domains follow at residues 125 to 191 (TPKN…SFVQ) and 283 to 347 (NPVV…ALFD). The A to I editase domain occupies 414–741 (VLSSGTKCIS…VRKPPEQDQF (328 aa)). Position 438 (His438) interacts with Zn(2+). Glu440 (proton donor) is an active-site residue. Residues Cys496 and Cys561 each contribute to the Zn(2+) site.

Brain specific.

It localises to the nucleus. Functionally, lacks editing activity. It prevents the binding of other ADAR enzymes to targets in vitro, and decreases the efficiency of these enzymes. Capable of binding to dsRNA but also to ssRNA. The chain is Double-stranded RNA-specific editase B2 (Adarb2) from Mus musculus (Mouse).